Consider the following 191-residue polypeptide: MPGSAPLILASASPRRLELLAQIGIVPDRVAPTDIDETRRKAESPRELALRLAREKAAACDAEGAFVLAADTVVALGQRNLEKAADETEAADFLRLLSGRAHQCITGVAVRAPSGQIVSRAVLARVKMKRLTEAEIAAYVASGDWKGKAGGYGIQGAAGGFVTAINGSYTAIVGLPLYETKSLLEGLGYRR.

The Proton acceptor role is filled by Asp71.

This sequence belongs to the Maf family. YhdE subfamily. It depends on a divalent metal cation as a cofactor.

The protein localises to the cytoplasm. It catalyses the reaction dTTP + H2O = dTMP + diphosphate + H(+). The enzyme catalyses UTP + H2O = UMP + diphosphate + H(+). Its function is as follows. Nucleoside triphosphate pyrophosphatase that hydrolyzes dTTP and UTP. May have a dual role in cell division arrest and in preventing the incorporation of modified nucleotides into cellular nucleic acids. The sequence is that of dTTP/UTP pyrophosphatase from Hyphomonas neptunium (strain ATCC 15444).